The primary structure comprises 203 residues: MREFLVLFNHAPTSPDRVRLKDLPGSGRFDLVCRVTTQALLYSHGVRTDTVVHLLLRGPDDPPKTITVTGRRVRRLYPDERTTAIHLRRALEADPDTEPHPGIFVRRADLEDLLGEMKGAKLYYLSEDGRDLEEVEPEPDAVFVLGDHEGPTPEQDRLLRRHADAVISLGPIPYHADQCIVILHRYLDVKRPPEYAHGPSNVM.

3 residues coordinate S-adenosyl-L-methionine: leucine 125, glycine 146, and cysteine 179.

Belongs to the methyltransferase superfamily. TrmY family. Homodimer.

The protein resides in the cytoplasm. The enzyme catalyses pseudouridine(54) in tRNA + S-adenosyl-L-methionine = N(1)-methylpseudouridine(54) in tRNA + S-adenosyl-L-homocysteine + H(+). In terms of biological role, specifically catalyzes the N1-methylation of pseudouridine at position 54 (Psi54) in tRNAs. This is tRNA (pseudouridine(54)-N(1))-methyltransferase from Methanopyrus kandleri (strain AV19 / DSM 6324 / JCM 9639 / NBRC 100938).